The following is a 396-amino-acid chain: G-protein coupled receptor 84 (396 aa).

Residues Met1–Tyr21 are Extracellular-facing. Residues Asn3 and Asn8 are each glycosylated (N-linked (GlcNAc...) asparagine). Residues Phe22–Leu42 traverse the membrane as a helical segment. At Leu43–Leu57 the chain is on the cytoplasmic side. The chain crosses the membrane as a helical span at residues Leu58–Val78. The Extracellular portion of the chain corresponds to Asp79–Arg94. The chain crosses the membrane as a helical span at residues Ile95–Ala115. Residues Leu116–Lys135 are Cytoplasmic-facing. Residues Gly136 to Trp156 form a helical membrane-spanning segment. Residues Asn157–Thr180 are Extracellular-facing. The chain crosses the membrane as a helical span at residues Ile181 to Ile201. Residues His202–Met320 lie on the Cytoplasmic side of the membrane. 2 positions are modified to phosphoserine: Ser221 and Ser224. Positions Leu241–Ala310 are disordered. Residues Gly253–Gly269 show a composition bias toward polar residues. A phosphothreonine mark is found at Thr263 and Thr264. Positions Ser290 to Thr308 are enriched in basic and acidic residues. A helical membrane pass occupies residues Cys321 to Leu341. Residues Asp342 to His352 lie on the Extracellular side of the membrane. The chain crosses the membrane as a helical span at residues Met353–Met373. Residues Asn374–His396 lie on the Cytoplasmic side of the membrane.

It belongs to the G-protein coupled receptor 1 family. Interacts with ARRB2 and ARR3. In terms of processing, phosphorylated by a subset of GPR84-activating ligands. Constitutively phosphorylated at Ser-221 and Ser-224 in the absence of 2-HTP. By contrast, Thr-263 and Thr-264 are phosphorylated only following prior cell treatment with 2-HTP. In terms of tissue distribution, expressed predominantly in hematopoietic tissues. Expressed mainly in the bone marrow with transcripts also detected in spleen, the lymph node, liver and the lung.

It is found in the cell membrane. Functionally, g protein-coupled receptor that responds endogenously to dietary fatty acids or nutrient, specifically medium-chain free fatty acid (FFA) with carbon chain lengths of C9 to C14. Capric acid (C10:0), undecanoic acid (C11:0) and lauric acid (C12:0) are the most potent agonists. In immune cells, functions as a pro-inflammatory receptor via 6-OAU and promotes the expression of pro-inflammatory mediators such as TNFalpha, IL-6 and IL-12B as well as stimulating chemotactic responses through activation of signaling mediators AKT, ERK and NF-kappa-B (by sim). In addition, triggers increased bacterial adhesion and phagocytosis in macrophages and regulates pro-inflammatory function via enhancing NLRP3 inflammasome activation. Also plays an important role in inflammation by modulating neutrophil functions. Mechanistically, promotes neutrophil chemotaxis, reactive oxygen species (ROS) production and degranulation via LYN-AKT/ERK pathway. To regulate ROS production, communicates with the two formyl peptide receptors FPR2 and FPR1 to control the NADPH oxidase activity in neutrophils. This chain is G-protein coupled receptor 84 (Gpr84), found in Mus musculus (Mouse).